Consider the following 140-residue polypeptide: Nucleoside diphosphate kinase (140 aa).

Lys-11, Phe-59, Arg-87, Thr-93, Arg-104, and Asn-114 together coordinate ATP. Catalysis depends on His-117, which acts as the Pros-phosphohistidine intermediate.

It belongs to the NDK family. In terms of assembly, homotetramer. Requires Mg(2+) as cofactor.

It localises to the cytoplasm. The enzyme catalyses a 2'-deoxyribonucleoside 5'-diphosphate + ATP = a 2'-deoxyribonucleoside 5'-triphosphate + ADP. The catalysed reaction is a ribonucleoside 5'-diphosphate + ATP = a ribonucleoside 5'-triphosphate + ADP. Functionally, major role in the synthesis of nucleoside triphosphates other than ATP. The ATP gamma phosphate is transferred to the NDP beta phosphate via a ping-pong mechanism, using a phosphorylated active-site intermediate. The polypeptide is Nucleoside diphosphate kinase (Brucella canis (strain ATCC 23365 / NCTC 10854 / RM-666)).